The primary structure comprises 317 residues: Beta-ketoacyl-[acyl-carrier-protein] synthase III (317 aa).

Catalysis depends on residues Cys112 and His244. The tract at residues 245–249 is ACP-binding; the sequence is QANLR. Residue Asn274 is part of the active site.

This sequence belongs to the thiolase-like superfamily. FabH family. As to quaternary structure, homodimer.

It localises to the cytoplasm. It carries out the reaction malonyl-[ACP] + acetyl-CoA + H(+) = 3-oxobutanoyl-[ACP] + CO2 + CoA. The protein operates within lipid metabolism; fatty acid biosynthesis. In terms of biological role, catalyzes the condensation reaction of fatty acid synthesis by the addition to an acyl acceptor of two carbons from malonyl-ACP. Catalyzes the first condensation reaction which initiates fatty acid synthesis and may therefore play a role in governing the total rate of fatty acid production. Possesses both acetoacetyl-ACP synthase and acetyl transacylase activities. Its substrate specificity determines the biosynthesis of branched-chain and/or straight-chain of fatty acids. The protein is Beta-ketoacyl-[acyl-carrier-protein] synthase III of Enterobacter sp. (strain 638).